A 138-amino-acid polypeptide reads, in one-letter code: DNA-directed RNA polymerase II subunit 4 (138 aa).

The residue at position 2 (S2) is an N-acetylserine.

The protein belongs to the eukaryotic RPB4 RNA polymerase subunit family. In terms of assembly, component of the RNA polymerase II complex consisting of at least 12 subunits. Interacts with NRPB7.

It localises to the nucleus. Its function is as follows. DNA-dependent RNA polymerase catalyzes the transcription of DNA into RNA using the four ribonucleoside triphosphates as substrates. Second largest component of RNA polymerase II which synthesizes mRNA precursors and many functional non-coding RNAs. Proposed to contribute to the polymerase catalytic activity and forms the polymerase active center together with the largest subunit. Pol II is the central component of the basal RNA polymerase II transcription machinery. It is composed of mobile elements that move relative to each other. This is DNA-directed RNA polymerase II subunit 4 (NRPB4) from Arabidopsis thaliana (Mouse-ear cress).